Reading from the N-terminus, the 93-residue chain is Protein VNG_0358C (93 aa).

This chain is Protein VNG_0358C, found in Halobacterium salinarum (strain ATCC 700922 / JCM 11081 / NRC-1) (Halobacterium halobium).